The sequence spans 108 residues: Urease subunit beta (108 aa).

It belongs to the urease beta subunit family. Heterotrimer of UreA (gamma), UreB (beta) and UreC (alpha) subunits. Three heterotrimers associate to form the active enzyme.

The protein localises to the cytoplasm. It carries out the reaction urea + 2 H2O + H(+) = hydrogencarbonate + 2 NH4(+). Its pathway is nitrogen metabolism; urea degradation; CO(2) and NH(3) from urea (urease route): step 1/1. The sequence is that of Urease subunit beta from Proteus hauseri.